Consider the following 365-residue polypeptide: Bifunctional chorismate mutase/prephenate dehydratase (365 aa).

A Chorismate mutase domain is found at 1 to 96; that stretch reads MADQDQLKAL…SCLALEQPLK (96 aa). 4 residues coordinate substrate: Arg-11, Arg-28, Lys-39, and Glu-57. Residues 97 to 272 form the Prephenate dehydratase domain; sequence VAYLGPEGTF…NSTRFLIIGN (176 aa). Residues 284-361 form the ACT domain; it reads SIIVSMRNKP…VALKVLGSYP (78 aa).

The protein localises to the cytoplasm. The enzyme catalyses chorismate = prephenate. It carries out the reaction prephenate + H(+) = 3-phenylpyruvate + CO2 + H2O. The protein operates within amino-acid biosynthesis; L-phenylalanine biosynthesis; phenylpyruvate from prephenate: step 1/1. It functions in the pathway metabolic intermediate biosynthesis; prephenate biosynthesis; prephenate from chorismate: step 1/1. Its function is as follows. Catalyzes the Claisen rearrangement of chorismate to prephenate and the decarboxylation/dehydration of prephenate to phenylpyruvate. In Pseudomonas aeruginosa (strain ATCC 15692 / DSM 22644 / CIP 104116 / JCM 14847 / LMG 12228 / 1C / PRS 101 / PAO1), this protein is Bifunctional chorismate mutase/prephenate dehydratase (pheA).